Consider the following 87-residue polypeptide: Small ribosomal subunit protein uS17 (87 aa).

It belongs to the universal ribosomal protein uS17 family. As to quaternary structure, part of the 30S ribosomal subunit.

Functionally, one of the primary rRNA binding proteins, it binds specifically to the 5'-end of 16S ribosomal RNA. The protein is Small ribosomal subunit protein uS17 of Endomicrobium trichonymphae.